Here is an 864-residue protein sequence, read N- to C-terminus: Xylosyltransferase 2 (864 aa).

At 1 to 15 the chain is on the cytoplasmic side; it reads MVASARVQKLVRRYK. The helical; Signal-anchor for type II membrane protein transmembrane segment at 16 to 36 threads the bilayer; sequence LAIATALAILLLQGLVVWSFS. Topologically, residues 37–864 are lumenal; that stretch reads GLEEDEPGEK…GPVKADGRLR (828 aa). 2 disordered regions span residues 39–123 and 136–158; these read EEDE…RQNL and AGFP…DNSF. The span at 53–65 shows a compositional bias: basic and acidic residues; that stretch reads RPLDPGEGSKDTD. Residues 73-82 show a composition bias toward basic residues; the sequence is SAGRRHGRWR. N-linked (GlcNAc...) asparagine glycosylation occurs at asparagine 122. 4 disulfide bridges follow: cysteine 162/cysteine 190, cysteine 206/cysteine 448, cysteine 467/cysteine 480, and cysteine 469/cysteine 478. Residues valine 239, aspartate 267, and 296 to 298 each bind UDP-alpha-D-xylose; that span reads TIW. Asparagine 327 is a glycosylation site (N-linked (GlcNAc...) asparagine). 400-401 contributes to the UDP-alpha-D-xylose binding site; the sequence is DW. UDP-alpha-D-xylose contacts are provided by residues serine 481 and 504-505; that span reads RK. Intrachain disulfides connect cysteine 580/cysteine 832 and cysteine 825/cysteine 838. Asparagine 682 carries an N-linked (GlcNAc...) asparagine glycan.

This sequence belongs to the glycosyltransferase 14 family. XylT subfamily. In terms of assembly, monomer. Requires Mg(2+) as cofactor. It depends on Mn(2+) as a cofactor. Post-translationally, contains disulfide bonds.

Its subcellular location is the golgi apparatus membrane. The protein resides in the secreted. It catalyses the reaction UDP-alpha-D-xylose + L-seryl-[protein] = 3-O-(beta-D-xylosyl)-L-seryl-[protein] + UDP + H(+). Its pathway is glycan metabolism; chondroitin sulfate biosynthesis. It functions in the pathway glycan metabolism; heparan sulfate biosynthesis. In terms of biological role, catalyzes the first step in the biosynthesis of chondroitin sulfate, heparan sulfate and dermatan sulfate proteoglycans, such as DCN. Transfers D-xylose from UDP-D-xylose to specific serine residues of the core protein. The sequence is that of Xylosyltransferase 2 (Xylt2) from Rattus norvegicus (Rat).